Here is a 668-residue protein sequence, read N- to C-terminus: Macrolide export ATP-binding/permease protein MacB 1/2 (668 aa).

The ABC transporter domain maps to 9-247 (IRLRGVGREY…PGPGPAQAPQ (239 aa)). 45-52 (GASGSGKS) provides a ligand contact to ATP. The disordered stretch occupies residues 230–257 (RTGAPAADPGPGPAQAPQPAPQPAPVQA). The segment covering 237–255 (DPGPGPAQAPQPAPQPAPV) has biased composition (pro residues). A run of 4 helical transmembrane segments spans residues 294–314 (FLTM…VALG), 541–561 (LALL…IGVM), 598–618 (LVCV…GLAF), and 634–654 (MLAA…LPAV).

It belongs to the ABC transporter superfamily. Macrolide exporter (TC 3.A.1.122) family. Homodimer.

The protein resides in the cell inner membrane. Its function is as follows. Non-canonical ABC transporter that contains transmembrane domains (TMD), which form a pore in the inner membrane, and an ATP-binding domain (NBD), which is responsible for energy generation. Confers resistance against macrolides. The sequence is that of Macrolide export ATP-binding/permease protein MacB 1/2 from Paracoccus denitrificans (strain Pd 1222).